The chain runs to 2525 residues: Highly reducing polyketide synthase cm3B (2525 aa).

Positions 1-10 are enriched in polar residues; it reads MQSDTNNSPL. The disordered stretch occupies residues 1-29; the sequence is MQSDTNNSPLSWEELRSGAASSDANSSPP. The Ketosynthase family 3 (KS3) domain maps to 29–450; that stretch reads PEPIAIIGMS…GTNAHVVVDA (422 aa). Catalysis depends on for beta-ketoacyl synthase activity residues Cys202, His336, and His376. The interval 560–895 is malonyl-CoA:ACP transacylase (MAT) domain; it reads VFSGQGSQYA…FLECLGALHV (336 aa). The segment at 949–1087 is N-terminal hotdog fold; sequence HELLGTFAHD…GLVHAETQAA (139 aa). Positions 949–1252 are dehydratase (DH) domain; sequence HELLGTFAHD…AKGVHTTTLP (304 aa). The region spanning 949–1257 is the PKS/mFAS DH domain; sequence HELLGTFAHD…TTTLPGDTGL (309 aa). His981 functions as the Proton acceptor; for dehydratase activity in the catalytic mechanism. A C-terminal hotdog fold region spans residues 1107–1257; sequence VHEVTPQKLY…TTTLPGDTGL (151 aa). Asp1169 functions as the Proton donor; for dehydratase activity in the catalytic mechanism. Residues 1399 to 1504 form a methyltransferase (CMet) domain region; sequence LEVGAGTASA…KKLLKPGGKF (106 aa). Residues 1799–2111 form an enoyl reductase (ER) domain region; sequence GLLESIRWKD…AGKHTGKIVL (313 aa). The Carrier domain occupies 2411–2489; the sequence is AQLLENISQL…ELAKIIAKES (79 aa). The ketoreductase (KR) domain stretch occupies residues 2411-2489; the sequence is AQLLENISQL…ELAKIIAKES (79 aa). Ser2449 carries the O-(pantetheine 4'-phosphoryl)serine modification.

It functions in the pathway secondary metabolite biosynthesis. Functionally, highly reducing polyketide synthase; part of the gene cluster that mediates the biosynthesis of beauveriolides I and III, cyclodepsipeptides acting as inhibitors of the acyl-CoA:cholesterol acyltransferase. The HR-PKS cm3B initiates the biosynthesis of beauveriolides by iteratively catalyzing the formation of the linear polyketide chain. The ATP-dependent acetyl-CoA ligase cm3D converts the polyketide carboxylic acid to a CoA thioester which id shuttled to the first T domain in the NRPS cm3A by the acetyltransferase cm3C. Cm3A contains 13 domains and assembles the polyketide chain, L-phenylalanine, L-alanine, and D-leucine (or D-allo-isoleucine) to form beauveriolide I (or beauveriolide III). The production of both beauveriolides I and III suggests the substrate adaptability of cm3B, using different amino acids as substrates. This chain is Highly reducing polyketide synthase cm3B, found in Cordyceps militaris (strain CM01) (Caterpillar fungus).